Consider the following 338-residue polypeptide: Lipoate-protein ligase A (338 aa).

Residues 29 to 216 (PATQRVLFLW…AFFAHYGERV (188 aa)) form the BPL/LPL catalytic domain. Residues R71, 76-79 (GAVF), and K134 each bind ATP. Residue K134 coordinates (R)-lipoate.

The protein belongs to the LplA family. In terms of assembly, monomer.

The protein localises to the cytoplasm. It catalyses the reaction L-lysyl-[lipoyl-carrier protein] + (R)-lipoate + ATP = N(6)-[(R)-lipoyl]-L-lysyl-[lipoyl-carrier protein] + AMP + diphosphate + H(+). The protein operates within protein modification; protein lipoylation via exogenous pathway; protein N(6)-(lipoyl)lysine from lipoate: step 1/2. It participates in protein modification; protein lipoylation via exogenous pathway; protein N(6)-(lipoyl)lysine from lipoate: step 2/2. Catalyzes both the ATP-dependent activation of exogenously supplied lipoate to lipoyl-AMP and the transfer of the activated lipoyl onto the lipoyl domains of lipoate-dependent enzymes. The sequence is that of Lipoate-protein ligase A from Escherichia fergusonii (strain ATCC 35469 / DSM 13698 / CCUG 18766 / IAM 14443 / JCM 21226 / LMG 7866 / NBRC 102419 / NCTC 12128 / CDC 0568-73).